The following is a 131-amino-acid chain: UPF0102 protein Ent638_3585 (131 aa).

The segment at 1-20 is disordered; sequence MAQIPAGADRPGKLSRKQTG.

It belongs to the UPF0102 family.

This is UPF0102 protein Ent638_3585 from Enterobacter sp. (strain 638).